We begin with the raw amino-acid sequence, 480 residues long: Bifunctional pantoate ligase/cytidylate kinase (480 aa).

The segment at 1–243 (MPTMGGLHQG…CGTTRLIDHV (243 aa)) is pantoate--beta-alanine ligase. 4 to 11 (MGGLHQGH) provides a ligand contact to ATP. Histidine 11 functions as the Proton donor in the catalytic mechanism. Glutamine 34 serves as a coordination point for (R)-pantoate. Glutamine 34 is a binding site for beta-alanine. Residue 123–126 (GEKD) participates in ATP binding. Glutamine 129 serves as a coordination point for (R)-pantoate. Residues valine 152 and 160-163 (LSSR) contribute to the ATP site. Residues 244 to 480 (FLMTRQPLVA…GEEAWPTPAG (237 aa)) form a cytidylate kinase region.

This sequence in the N-terminal section; belongs to the pantothenate synthetase family. It in the C-terminal section; belongs to the cytidylate kinase family. Type 1 subfamily.

The protein localises to the cytoplasm. It catalyses the reaction (R)-pantoate + beta-alanine + ATP = (R)-pantothenate + AMP + diphosphate + H(+). The catalysed reaction is CMP + ATP = CDP + ADP. The enzyme catalyses dCMP + ATP = dCDP + ADP. The protein operates within cofactor biosynthesis; (R)-pantothenate biosynthesis; (R)-pantothenate from (R)-pantoate and beta-alanine: step 1/1. Functionally, catalyzes the condensation of pantoate with beta-alanine in an ATP-dependent reaction via a pantoyl-adenylate intermediate. Catalyzes the transfer of a phosphate group from ATP to either CMP or dCMP to form CDP or dCDP and ADP, respectively. The protein is Bifunctional pantoate ligase/cytidylate kinase of Synechococcus sp. (strain CC9605).